The sequence spans 816 residues: Protein EFR3 homolog B (816 aa).

The segment covering 206-219 has biased composition (polar residues); the sequence is SGEGTESRSPSPLQ. Residues 206–230 are disordered; sequence SGEGTESRSPSPLQASEKEKESPAE. Positions 221 to 230 are enriched in basic and acidic residues; it reads SEKEKESPAE.

It belongs to the EFR3 family. In terms of assembly, component of a phosphatidylinositol 4-kinase (PI4K) complex. Post-translationally, palmitoylated at its N-terminus, anchoring the protein to the plasma membrane.

The protein resides in the cell membrane. In terms of biological role, component of a complex required to localize phosphatidylinositol 4-kinase (PI4K) to the plasma membrane. The complex acts as a regulator of phosphatidylinositol 4-phosphate (PtdIns(4)P) synthesis. In the complex, efr3b probably acts as the membrane-anchoring component. The chain is Protein EFR3 homolog B (efr3b) from Danio rerio (Zebrafish).